The chain runs to 202 residues: Outer-membrane lipoprotein LolB (202 aa).

Positions 1–24 (MESKEQHLIRQYFILAMFFLFLAG) are cleaved as a signal peptide. The N-palmitoyl cysteine moiety is linked to residue C25. C25 carries S-diacylglycerol cysteine lipidation.

This sequence belongs to the LolB family. In terms of assembly, monomer.

Its subcellular location is the cell outer membrane. Functionally, plays a critical role in the incorporation of lipoproteins in the outer membrane after they are released by the LolA protein. This is Outer-membrane lipoprotein LolB from Pseudoalteromonas translucida (strain TAC 125).